The sequence spans 229 residues: MSRNDARYLRCTAALGAAFFACGAAAAELTSPPVAPATEGVAAGLSPWQIRVRGLGVLTEDSGSINGVPGSDLSYSDSLIPELDISYFFTDNIAAELILGTTYANIKEVGAVGVPVGKAWLLPPTLTLQYHFTDFGAFKPYLGAGINYSLFYNQSEKAGFHDLDVDNHVGAALQVGFDYMVDEHWGVNFDVKKIFLETEWKADHDVLGPLSGKAKIDPWLIGAGVTYRF.

The N-terminal stretch at 1-26 (MSRNDARYLRCTAALGAAFFACGAAA) is a signal peptide.

Belongs to the OmpW/AlkL family.

Its subcellular location is the cell outer membrane. This is an uncharacterized protein from Sinorhizobium fredii (strain NBRC 101917 / NGR234).